Reading from the N-terminus, the 246-residue chain is MSGHSKWHNIQAKKGKVDAKRGKIFTKIGKEIVVAVKQGGPSADSNPRLRDVIAKAKANNMPNDTIERSIKKASGELNAVDYETITYEGYGPAGIAVLVDVLTDNKNRSAGNVRYAFTKQGGNMGSTGCVSFMFQSKGQIVIEKKDGLDEDELMMMALDAGAEDFESEDEVYAVTTSQEDFGTVREALEAEGLEFLEAEIKMVPNTYTAIDEETATKFQKMLDVLEDDDDVQNVYHNAEFPEGWEE.

It belongs to the TACO1 family.

Its subcellular location is the cytoplasm. The protein is Probable transcriptional regulatory protein CLB_3102 of Clostridium botulinum (strain ATCC 19397 / Type A).